The primary structure comprises 188 residues: MFQATSTGAQIMHAAFPRSWRRGHVLPLRSAKIFKPLACLELRGSTGIGGFHEIELKVRDYELDQFGVVNNAVYANYCQHGRHEFMDSIGINCNEVSRSGGALAIPELTIKFLAPLRSGCRFVVKTRISGISLVRIYFEQFIFKLPNQEPILEAKGTAVWLDNKYRPTRVPSHVRSYFGHFQCQHLVD.

Residues 1–47 (MFQATSTGAQIMHAAFPRSWRRGHVLPLRSAKIFKPLACLELRGSTG) constitute a chloroplast transit peptide. The active site involves Asp64.

The protein belongs to the 4-hydroxybenzoyl-CoA thioesterase family. In terms of tissue distribution, expressed in endodermal and peridermal cells in young and mature roots, in boundaries of stem lateral organs and developing seeds.

Its subcellular location is the plastid. It localises to the chloroplast. In terms of biological role, acyl-ACP thioesterase involved in the production of fatty acids and beta-keto fatty acids. Can produce beta-keto fatty acids of medium chain (8:0 and 10:0) and small amounts of 8:0 fatty acid when expressed in a heterologous organism (E.coli). May play a role in suberin biosynthesis. The sequence is that of Acyl-acyl carrier protein thioesterase ATL2, chloroplastic from Arabidopsis thaliana (Mouse-ear cress).